The sequence spans 324 residues: NAD(P)H-dependent D-xylose reductase I,II (324 aa).

Tyr-54 (proton donor) is an active-site residue. His-116 contacts substrate. Residues 171–172, 220–229, and 276–286 each bind NAD(+); these read SN, SSFGPQSFLE, and KSNNPERLAQN.

Belongs to the aldo/keto reductase family.

It carries out the reaction xylitol + NAD(+) = D-xylose + NADH + H(+). It catalyses the reaction xylitol + NADP(+) = D-xylose + NADPH + H(+). It participates in carbohydrate metabolism; D-xylose degradation. Its function is as follows. Reduces D-xylose into xylitol. Has a preference for NADPH, but can also utilize NADH as cosubstrate. This is NAD(P)H-dependent D-xylose reductase I,II (xyrA) from Candida tropicalis (Yeast).